A 417-amino-acid polypeptide reads, in one-letter code: 4-hydroxy-3-methylbut-2-en-1-yl diphosphate synthase (flavodoxin) (417 aa).

[4Fe-4S] cluster-binding residues include Cys-304, Cys-307, Cys-350, and Glu-357.

This sequence belongs to the IspG family. [4Fe-4S] cluster serves as cofactor.

It carries out the reaction (2E)-4-hydroxy-3-methylbut-2-enyl diphosphate + oxidized [flavodoxin] + H2O + 2 H(+) = 2-C-methyl-D-erythritol 2,4-cyclic diphosphate + reduced [flavodoxin]. It functions in the pathway isoprenoid biosynthesis; isopentenyl diphosphate biosynthesis via DXP pathway; isopentenyl diphosphate from 1-deoxy-D-xylulose 5-phosphate: step 5/6. Converts 2C-methyl-D-erythritol 2,4-cyclodiphosphate (ME-2,4cPP) into 1-hydroxy-2-methyl-2-(E)-butenyl 4-diphosphate. The chain is 4-hydroxy-3-methylbut-2-en-1-yl diphosphate synthase (flavodoxin) from Sinorhizobium medicae (strain WSM419) (Ensifer medicae).